The chain runs to 207 residues: Protein GrpE (207 aa).

Residues 1–11 show a composition bias toward basic and acidic residues; it reads MTETDGQKDNN. The disordered stretch occupies residues 1–40; it reads MTETDGQKDNNQDTAQAAADPVVSKPYIMPDDPEEGSNEA.

It belongs to the GrpE family. Homodimer.

It is found in the cytoplasm. In terms of biological role, participates actively in the response to hyperosmotic and heat shock by preventing the aggregation of stress-denatured proteins, in association with DnaK and GrpE. It is the nucleotide exchange factor for DnaK and may function as a thermosensor. Unfolded proteins bind initially to DnaJ; upon interaction with the DnaJ-bound protein, DnaK hydrolyzes its bound ATP, resulting in the formation of a stable complex. GrpE releases ADP from DnaK; ATP binding to DnaK triggers the release of the substrate protein, thus completing the reaction cycle. Several rounds of ATP-dependent interactions between DnaJ, DnaK and GrpE are required for fully efficient folding. The protein is Protein GrpE of Rhodopseudomonas palustris (strain ATCC BAA-98 / CGA009).